The sequence spans 263 residues: Ribonuclease HII (263 aa).

One can recognise an RNase H type-2 domain in the interval 71-262 (QAIAGIDEVG…VKSMCCDSTN (192 aa)). A divalent metal cation contacts are provided by Asp-77, Glu-78, and Asp-172.

This sequence belongs to the RNase HII family. Mn(2+) serves as cofactor. The cofactor is Mg(2+).

The protein localises to the cytoplasm. The enzyme catalyses Endonucleolytic cleavage to 5'-phosphomonoester.. Endonuclease that specifically degrades the RNA of RNA-DNA hybrids. The sequence is that of Ribonuclease HII from Streptococcus pyogenes serotype M5 (strain Manfredo).